The sequence spans 455 residues: Serine--tRNA ligase (455 aa).

252–254 (TAE) lines the L-serine pocket. Residues 283-285 (RKE) and Val-299 contribute to the ATP site. Residue Glu-306 coordinates L-serine. Position 370–373 (370–373 (EVVS)) interacts with ATP. Thr-406 lines the L-serine pocket.

The protein belongs to the class-II aminoacyl-tRNA synthetase family. Type-1 seryl-tRNA synthetase subfamily. In terms of assembly, homodimer. The tRNA molecule binds across the dimer.

Its subcellular location is the cytoplasm. It carries out the reaction tRNA(Ser) + L-serine + ATP = L-seryl-tRNA(Ser) + AMP + diphosphate + H(+). The catalysed reaction is tRNA(Sec) + L-serine + ATP = L-seryl-tRNA(Sec) + AMP + diphosphate + H(+). The protein operates within aminoacyl-tRNA biosynthesis; selenocysteinyl-tRNA(Sec) biosynthesis; L-seryl-tRNA(Sec) from L-serine and tRNA(Sec): step 1/1. Catalyzes the attachment of serine to tRNA(Ser). Is also able to aminoacylate tRNA(Sec) with serine, to form the misacylated tRNA L-seryl-tRNA(Sec), which will be further converted into selenocysteinyl-tRNA(Sec). The sequence is that of Serine--tRNA ligase from Thermococcus kodakarensis (strain ATCC BAA-918 / JCM 12380 / KOD1) (Pyrococcus kodakaraensis (strain KOD1)).